We begin with the raw amino-acid sequence, 242 residues long: Protein HTATIP2 (242 aa).

At Ala2 the chain carries N-acetylalanine. The required for interaction with elongation factor EEF1A1 stretch occupies residues 2-25 (ADKEALPKLREDFKMQNKSVFILG). Positions 27, 28, 29, 30, 52, 53, 92, 93, 143, 147, 170, and 178 each coordinate NADPH. The active-site Proton acceptor is the Tyr143. Residue Lys147 is part of the active site.

As to quaternary structure, monomer. Forms homodimers during oxidative stress. Interacts (via N-terminus) with elongation factor EEF1A1 (via middle-region); the interaction is direct and competes with EEF1A1 binding to guanyl-nucleotide exchange factor EEF1B2, thereby inhibiting GDP for GTP exchange and reactivation of EEF1A1. Interacts with nuclear transport receptors XPO4, IPO5/RANBP5, IPO7, IPO9 and KPNB1 as well as GCN1L1/GCN1 and LRPPRC probably through their HEAT repeats. Binds NCOA5/CIA.

The protein resides in the cytoplasm. In terms of biological role, represses translation by preventing reactivation of elongation factor eEF1A. May also inhibit nuclear import by competing with nuclear import substrates for binding to a subset of nuclear transport receptors. Has additionally been proposed to act as a redox sensor involved in cellular oxidative stress surveillance. In Mus musculus (Mouse), this protein is Protein HTATIP2.